We begin with the raw amino-acid sequence, 194 residues long: 5-formyltetrahydrofolate cyclo-ligase (194 aa).

Residues Lys-6–Arg-10, Gly-139–Asp-146, and Asp-177 each bind ATP.

It belongs to the 5-formyltetrahydrofolate cyclo-ligase family.

It catalyses the reaction (6S)-5-formyl-5,6,7,8-tetrahydrofolate + ATP = (6R)-5,10-methenyltetrahydrofolate + ADP + phosphate. Its pathway is one-carbon metabolism; tetrahydrofolate interconversion. Functionally, involved in the removal of 5-formyltetrahydrofolate. In vitro, it is a potent inhibitor of various folate-dependent enzymes in the C1 metabolism network and in vivo it might function as a folate storage. 5-formyltetrahydrofolate is also used as an antifolate rescue agent in cancer chemotherapy. Catalyzes the irreversible ATP-dependent transformation of 5-formyltetrahydrofolate (5-CHO-THF) to form 5,10-methenyltetrahydrofolate (5,10-CH=THF). The reverse reaction is catalyzed by the serine hydroxymethyltransferase GlyA (SHMT). In Mycolicibacterium smegmatis (strain ATCC 700084 / mc(2)155) (Mycobacterium smegmatis), this protein is 5-formyltetrahydrofolate cyclo-ligase.